The primary structure comprises 416 residues: Ribosome biogenesis protein WDR12 homolog (416 aa).

A ubiquitin-like (UBL) domain region spans residues 7 to 89 (VQVRFFTKQK…ESVVEIEYLE (83 aa)). WD repeat units lie at residues 101–138 (VHDD…LAKV), 140–184 (GHTS…ASCV), 189–228 (GHTQ…EGGD), 259–297 (GHTQ…NKQT), 299–338 (TGSK…GQVV), 344–384 (SHQG…TPLY), and 388–416 (GHQD…LILY). A disordered region spans residues 226–245 (GGDEGENGSLSKKQKTTGVK).

It belongs to the WD repeat WDR12/YTM1 family.

The protein localises to the nucleus. It localises to the nucleolus. The protein resides in the nucleoplasm. Required for maturation of ribosomal RNAs and formation of the large ribosomal subunit. This chain is Ribosome biogenesis protein WDR12 homolog, found in Nematostella vectensis (Starlet sea anemone).